The primary structure comprises 321 residues: MKVRLGVDMMGGDHDPLVVWEALGEVLLSSIGEQPVEFTVFATSDVHHQLMNSPLSRSVRIVTAEDFVSMEDSLLAAVRKKRSSMALGLDALQQGDLDGFVSSGNTAALVTLARSKIPMIPAVPRPALLVSVPTLSGFAVILDVGATVSVNPDEMVGFARMGLAYRQSLSSNSNQPFTLGLLNIGSEERKGTDSHKQTFRMLRNIFGSAFLGNIESGDVFSGKVDIVVTDGFTGNVFLKTAEGLFDFLRRILGDRLEKSIKMQFDYTIYPGSIISGLSRLVIKCHGKSHGTALFGGISGAIDLARANVCSRIADRFGDNVV.

The protein belongs to the PlsX family. Homodimer. Probably interacts with PlsY.

It localises to the cytoplasm. The catalysed reaction is a fatty acyl-[ACP] + phosphate = an acyl phosphate + holo-[ACP]. It functions in the pathway lipid metabolism; phospholipid metabolism. Functionally, catalyzes the reversible formation of acyl-phosphate (acyl-PO(4)) from acyl-[acyl-carrier-protein] (acyl-ACP). This enzyme utilizes acyl-ACP as fatty acyl donor, but not acyl-CoA. The chain is Phosphate acyltransferase from Chlamydia trachomatis serovar A (strain ATCC VR-571B / DSM 19440 / HAR-13).